A 302-amino-acid chain; its full sequence is ATP synthase gamma chain (302 aa).

The protein belongs to the ATPase gamma chain family. In terms of assembly, F-type ATPases have 2 components, CF(1) - the catalytic core - and CF(0) - the membrane proton channel. CF(1) has five subunits: alpha(3), beta(3), gamma(1), delta(1), epsilon(1). CF(0) has three main subunits: a, b and c.

The protein resides in the cell inner membrane. Its function is as follows. Produces ATP from ADP in the presence of a proton gradient across the membrane. The gamma chain is believed to be important in regulating ATPase activity and the flow of protons through the CF(0) complex. This Bartonella bacilliformis (strain ATCC 35685 / KC583 / Herrer 020/F12,63) protein is ATP synthase gamma chain.